Here is a 327-residue protein sequence, read N- to C-terminus: MRHLLSTADLSRADALAVLDTAEEMAAVNQREVKKLPALRGRTVVNLFLEDSTRTRISFEAAAKRLSADVINFSAKGSSVSKGESLKDTVQTLEAIGADAIVMRHWSSGAARQLADSGWVRSAVVNAGDGTHEHPTQALLDAFTLRRRLAAATGEDLVGQDLTGMRVVIVGDILHSRVARSNVWLLSTLGAQVTLAAPPTLLPVGVAAWPCQVTYSLDEALDASPDAVMMLRVQAERMGGAFFPSAGEYTRTWGLTDDRFARLTAGRGALLDEPVVMHPGPMNRGLEISPAAADSPRNTALEQVANGVSVRMAVLHLVLNHDQEVRP.

Residues R54 and T55 each contribute to the carbamoyl phosphate site. An L-aspartate-binding site is contributed by K82. Carbamoyl phosphate is bound by residues R104, H134, and Q137. Positions 177 and 232 each coordinate L-aspartate. Residues G280 and P281 each contribute to the carbamoyl phosphate site.

This sequence belongs to the aspartate/ornithine carbamoyltransferase superfamily. ATCase family. In terms of assembly, heterododecamer (2C3:3R2) of six catalytic PyrB chains organized as two trimers (C3), and six regulatory PyrI chains organized as three dimers (R2).

It carries out the reaction carbamoyl phosphate + L-aspartate = N-carbamoyl-L-aspartate + phosphate + H(+). It participates in pyrimidine metabolism; UMP biosynthesis via de novo pathway; (S)-dihydroorotate from bicarbonate: step 2/3. Catalyzes the condensation of carbamoyl phosphate and aspartate to form carbamoyl aspartate and inorganic phosphate, the committed step in the de novo pyrimidine nucleotide biosynthesis pathway. The chain is Aspartate carbamoyltransferase catalytic subunit from Micrococcus luteus (strain ATCC 4698 / DSM 20030 / JCM 1464 / CCM 169 / CCUG 5858 / IAM 1056 / NBRC 3333 / NCIMB 9278 / NCTC 2665 / VKM Ac-2230) (Micrococcus lysodeikticus).